Here is a 234-residue protein sequence, read N- to C-terminus: AGEDHGRGPYVQADLAYAYEHITHDYPEQTGTKKDKISTVSDYFRNVRTHSIHPRVSVGYDFGGWRIAADYARYRKWNDDKYSVDIKELENKNQNKRDLKTENQENGTFHAVSSLGLSAVYDFKLNDKFKPYIGARVAYGHVRHSIDSTKKTTKFLTSSYGGLNPTVYTEENTQNAHHQSNSIRRVGLGVIAGVGFDITPKLTLDTGYRYHYWGRLENTRFKTHEASLGVRYRF.

Residue Ala-1 is a signal peptide.

It belongs to the opacity porin family.

The protein localises to the cell outer membrane. Its function is as follows. Implicated in a number of adherence functions. OPA proteins are implicated in pathogenesis and are subject to phase variation. The chain is Opacity protein opA56 (opaF) from Neisseria gonorrhoeae.